A 177-amino-acid polypeptide reads, in one-letter code: Inorganic pyrophosphatase (177 aa).

Substrate is bound by residues K31, R45, and Y57. Mg(2+) contacts are provided by D67, D72, and D104. Y141 contacts substrate.

This sequence belongs to the PPase family. Homohexamer. Requires Mg(2+) as cofactor.

Its subcellular location is the cytoplasm. It carries out the reaction diphosphate + H2O = 2 phosphate + H(+). Catalyzes the hydrolysis of inorganic pyrophosphate (PPi) forming two phosphate ions. The protein is Inorganic pyrophosphatase of Halobacterium salinarum (strain ATCC 700922 / JCM 11081 / NRC-1) (Halobacterium halobium).